Reading from the N-terminus, the 484-residue chain is uncharacterized protein (484 aa).

12 consecutive transmembrane segments (helical) span residues 19 to 39 (LSFG…MIFV), 78 to 98 (VNWG…WLIV), 111 to 131 (FFML…FIIL), 134 to 154 (IFAI…SNYL), 165 to 185 (FSPF…AGII), 199 to 219 (IVFL…IILG), 249 to 269 (TWYW…PFTF), 289 to 309 (ISVF…TIGL), 321 to 341 (ISTI…VFVL), 360 to 380 (LFLF…GVML), 398 to 418 (FGLI…ITSL), and 440 to 460 (LGAY…LALL).

It localises to the cell membrane. This is an uncharacterized protein from Mesomycoplasma hyopneumoniae (strain 232) (Mycoplasma hyopneumoniae).